The primary structure comprises 655 residues: Phosphatidylinositol-3,5-bisphosphate 3-phosphatase MTMR6 (655 aa).

Residues 1-101 (MEHIRTTKVE…YNSLLQLSKQ (101 aa)) form the GRAM domain. Residues 2–141 (EHIRTTKVEQ…AEYERMGVPN (140 aa)) are interaction with RAB1B. At Y108 the chain carries Phosphotyrosine. Residues 124–537 (GWQLIDLAAE…FNFKFWRNMY (414 aa)) enclose the Myotubularin phosphatase domain. A 1,2-diacyl-sn-glycero-3-phospho-(1D-myo-inositol-3,5-bisphosphate) contacts are provided by N286, N311, and I312. Positions 286, 311, and 312 each coordinate a 1,2-diacyl-sn-glycero-3-phospho-(1D-myo-inositol-3-phosphate). C374 serves as the catalytic Phosphocysteine intermediate. The a 1,2-diacyl-sn-glycero-3-phospho-(1D-myo-inositol-3,5-bisphosphate) site is built by S375, D376, G377, W378, D379, R380, K416, and R420. Residues S375, D376, G377, W378, D379, and R380 each coordinate a 1,2-diacyl-sn-glycero-3-phospho-(1D-myo-inositol-3-phosphate). An a 1,2-diacyl-sn-glycero-3-phospho-(1D-myo-inositol-3-phosphate)-binding site is contributed by R420. The stretch at 547–581 (RQSVLNIIMNMNEQNKQLEEDVKDLEAKIKQCKSG) forms a coiled coil. S595, S623, and S645 each carry phosphoserine.

This sequence belongs to the protein-tyrosine phosphatase family. Non-receptor class myotubularin subfamily. As to quaternary structure, homodimer. Heterodimer (via C-terminus) with MTMR9 (via C-terminus). Interacts with ALKBH4. Interacts with KCNN4. Interacts (via GRAM domain) with RAB1B (in GDP-bound form); the interaction regulates MTMR6 recruitment to the endoplasmic reticulum-Golgi intermediate compartment.

It is found in the cytoplasm. The protein localises to the endoplasmic reticulum. The protein resides in the cell projection. It localises to the ruffle membrane. Its subcellular location is the endoplasmic reticulum-Golgi intermediate compartment. It is found in the perinuclear region. The enzyme catalyses a 1,2-diacyl-sn-glycero-3-phospho-(1D-myo-inositol-3,5-bisphosphate) + H2O = a 1,2-diacyl-sn-glycero-3-phospho-(1D-myo-inositol-5-phosphate) + phosphate. The catalysed reaction is a 1,2-diacyl-sn-glycero-3-phospho-(1D-myo-inositol-3-phosphate) + H2O = a 1,2-diacyl-sn-glycero-3-phospho-(1D-myo-inositol) + phosphate. It catalyses the reaction 1,2-dioctanoyl-sn-glycero-3-phospho-(1D-myo-inositol-3,5-bisphosphate) + H2O = 1,2-dioctanoyl-sn-glycero-3-phospho-(1D-myo-inositol-5-phosphate) + phosphate. It carries out the reaction 1,2-dioctanoyl-sn-glycero-3-phospho-(1-D-myo-inositol-3-phosphate) + H2O = 1,2-dioctanoyl-sn-glycero-3-phospho-(1D-myo-inositol) + phosphate. With respect to regulation, allosterically activated by phosphatidylserine and/or phosphatidylinositol 4-phosphate (PtdIns(4)P), and phosphatidylinositol 5-phosphate (PtdIns(5)P). Interaction with MTMR9 increases catalytic activity towards phosphatidylinositol 3,5-bisphosphate. Lipid phosphatase that specifically dephosphorylates the D-3 position of phosphatidylinositol 3-phosphate and phosphatidylinositol 3,5-bisphosphate, generating phosphatidylinositol and phosphatidylinositol 5-phosphate. Binds with high affinity to phosphatidylinositol 3,5-bisphosphate (PtdIns(3,5)P2) but also to phosphatidylinositol 3-phosphate (PtdIns(3)P), phosphatidylinositol 4-phosphate (PtdIns(4)P), and phosphatidylinositol 5-phosphate (PtdIns(5)P), phosphatidic acid and phosphatidylserine. Negatively regulates ER-Golgi protein transport. Probably in association with MTMR9, plays a role in the late stages of macropinocytosis by dephosphorylating phosphatidylinositol 3-phosphate in membrane ruffles. Acts as a negative regulator of KCNN4/KCa3.1 channel activity in CD4(+) T-cells possibly by decreasing intracellular levels of phosphatidylinositol 3-phosphate. Negatively regulates proliferation of reactivated CD4(+) T-cells. In complex with MTMR9, negatively regulates DNA damage-induced apoptosis. The formation of the MTMR6-MTMR9 complex stabilizes both MTMR6 and MTMR9 protein levels. In Rattus norvegicus (Rat), this protein is Phosphatidylinositol-3,5-bisphosphate 3-phosphatase MTMR6.